The sequence spans 908 residues: Translation initiation factor IF-2 (908 aa).

2 disordered regions span residues 52 to 229 (QSHG…AEEA) and 241 to 316 (AGQY…SAQH). The segment covering 65–84 (KSKTTSTARVTGSSGKSKSV) has biased composition (polar residues). 6 stretches are compositionally biased toward basic and acidic residues: residues 94-108 (FEKP…ELAA), 120-138 (AAKD…EERQ), 176-185 (IEVKPKEQPK), 193-229 (PKVE…AEEA), 270-280 (SFEKERREIKR), and 294-303 (KNQDEREIKN). Residues 409-578 (TRPPVVTIMG…SLQAELMELE (170 aa)) form the tr-type G domain. The interval 418–425 (GHVDHGKT) is G1. Residue 418–425 (GHVDHGKT) participates in GTP binding. Residues 443-447 (GITQH) form a G2 region. Positions 464–467 (DTPG) are G3. GTP contacts are provided by residues 464-468 (DTPGH) and 518-521 (NKMD). Residues 518 to 521 (NKMD) form a G4 region. Residues 554-556 (SAK) form a G5 region.

Belongs to the TRAFAC class translation factor GTPase superfamily. Classic translation factor GTPase family. IF-2 subfamily.

The protein localises to the cytoplasm. Functionally, one of the essential components for the initiation of protein synthesis. Protects formylmethionyl-tRNA from spontaneous hydrolysis and promotes its binding to the 30S ribosomal subunits. Also involved in the hydrolysis of GTP during the formation of the 70S ribosomal complex. This chain is Translation initiation factor IF-2, found in Psychrobacter arcticus (strain DSM 17307 / VKM B-2377 / 273-4).